Consider the following 146-residue polypeptide: Snaclec agkicetin-C subunit beta (146 aa).

An N-terminal signal peptide occupies residues 1-23 (MGRFIFVSFGLLVVFLSLSGTGA). 3 cysteine pairs are disulfide-bonded: C25–C36, C53–C142, and C119–C134. In terms of domain architecture, C-type lectin spans 32 to 143 (YEGNCYLVVK…CSRTQPFVCK (112 aa)).

It belongs to the snaclec family. In terms of assembly, heterodimer of subunits alpha and beta; disulfide-linked. As to expression, expressed by the venom gland.

It is found in the secreted. Functionally, is a potent glycoprotein Ibalpha (GP1BA) antagonist. Concentration-dependently inhibits botrocetin-, ristocetin- and low dose thrombin-induced platelet aggregation. Inhibits platelet adhesion only through inhibiting the vWF interaction with GP1BA, but has minimal effect on other platelet receptors, such as alpha-IIb/beta-3 (ITGA2B/ITGB3) or alpha-2/beta-1 (ITGA2/ITGB1). Causes an instant severe thrombocytopenia in rats and is not lethal to mice. This Deinagkistrodon acutus (Hundred-pace snake) protein is Snaclec agkicetin-C subunit beta.